A 545-amino-acid polypeptide reads, in one-letter code: CTP synthase (545 aa).

The segment at 1–266 (MATNYIFVTG…DDFVCERFRL (266 aa)) is amidoligase domain. Residue S14 coordinates CTP. A UTP-binding site is contributed by S14. Residues 15–20 (SLGKGI) and D72 each bind ATP. Positions 72 and 140 each coordinate Mg(2+). CTP-binding positions include 147–149 (DIE), 187–192 (KTKPTQ), and K223. Residues 187 to 192 (KTKPTQ) and K223 contribute to the UTP site. Residue 239-241 (KDV) coordinates ATP. The region spanning 291–542 (TIGMVGKYTE…VKAAYENHKK (252 aa)) is the Glutamine amidotransferase type-1 domain. G352 is an L-glutamine binding site. The Nucleophile; for glutamine hydrolysis role is filled by C379. Residues 380-383 (LGMQ), E403, and R470 contribute to the L-glutamine site. Catalysis depends on residues H515 and E517.

It belongs to the CTP synthase family. In terms of assembly, homotetramer.

It carries out the reaction UTP + L-glutamine + ATP + H2O = CTP + L-glutamate + ADP + phosphate + 2 H(+). It catalyses the reaction L-glutamine + H2O = L-glutamate + NH4(+). The enzyme catalyses UTP + NH4(+) + ATP = CTP + ADP + phosphate + 2 H(+). It participates in pyrimidine metabolism; CTP biosynthesis via de novo pathway; CTP from UDP: step 2/2. Allosterically activated by GTP, when glutamine is the substrate; GTP has no effect on the reaction when ammonia is the substrate. The allosteric effector GTP functions by stabilizing the protein conformation that binds the tetrahedral intermediate(s) formed during glutamine hydrolysis. Inhibited by the product CTP, via allosteric rather than competitive inhibition. Its function is as follows. Catalyzes the ATP-dependent amination of UTP to CTP with either L-glutamine or ammonia as the source of nitrogen. Regulates intracellular CTP levels through interactions with the four ribonucleotide triphosphates. This chain is CTP synthase, found in Haemophilus influenzae (strain PittEE).